The chain runs to 123 residues: Ribonuclease P protein component 2 (123 aa).

Belongs to the eukaryotic/archaeal RNase P protein component 2 family. Consists of a catalytic RNA component and at least 4 protein subunits.

It carries out the reaction Endonucleolytic cleavage of RNA, removing 5'-extranucleotides from tRNA precursor.. Functionally, part of ribonuclease P, a protein complex that generates mature tRNA molecules by cleaving their 5'-ends. This is Ribonuclease P protein component 2 from Aeropyrum pernix (strain ATCC 700893 / DSM 11879 / JCM 9820 / NBRC 100138 / K1).